Consider the following 300-residue polypeptide: L-threonine kinase (300 aa).

92–102 (PVAKGMASSTA) is a binding site for ATP.

Belongs to the GHMP kinase family. PduX subfamily.

It localises to the cytoplasm. The enzyme catalyses L-threonine + ATP = O-phospho-L-threonine + ADP + H(+). It functions in the pathway cofactor biosynthesis; adenosylcobalamin biosynthesis. It participates in polyol metabolism; 1,2-propanediol degradation. Functionally, L-threonine kinase that catalyzes the conversion of L-threonine to L-threonine-O-3-phosphate. Involved in the de novo synthesis of adenosylcobalamin (coenzyme B12) and the assimilation of cobyric acid. Uses ATP; the activity with CTP, GTP or UTP is 6, 11, and 3% of the activity with ATP, respectively. The 1,2-propanediol (1,2-PD)-specific bacterial microcompartment (BMC) concentrates low levels of 1,2-PD catabolic enzymes, concentrates volatile reaction intermediates thus enhancing pathway flux and keeps the level of toxic, mutagenic propionaldehyde low. This gene probably benefits from its induction via the Pdu promoter, rather than a physical interaction with the BMC. This Salmonella typhimurium (strain LT2 / SGSC1412 / ATCC 700720) protein is L-threonine kinase.